The following is a 799-amino-acid chain: 1-phosphatidylinositol 4,5-bisphosphate phosphodiesterase delta-4 (799 aa).

One can recognise a PH domain in the interval 16-124; it reads LLMQEGMPMR…WMRGLHLLVD (109 aa). Residues 26 to 53 are substrate binding; the sequence is KVRSKSWKKLRYFRLQNDGMTVWHARQA. EF-hand domains are found at residues 134–169, 170–205, and 206–237; these read RLDQ…MNVE, MDQE…LTKR, and AEVQ…EQKE. Ca(2+) contacts are provided by aspartate 147, asparagine 149, aspartate 151, lysine 153, glutamate 158, aspartate 183, serine 185, serine 187, threonine 189, and glutamate 194. Residues 213-243 carry the GBA motif; sequence ESFSADGQKLTLLEFSDFLREEQKERDCTSE. A PI-PLC X-box domain is found at 290-435; sequence QDMTQPLNHY…LRRKILVKGK (146 aa). Residue histidine 305 is part of the active site. Asparagine 306, glutamate 335, and aspartate 337 together coordinate Ca(2+). Histidine 350 is an active-site residue. Residue glutamate 384 participates in Ca(2+) binding. The substrate site is built by lysine 433 and lysine 435. Residue serine 460 is modified to Phosphoserine. The 117-residue stretch at 530-646 folds into the PI-PLC Y-box domain; sequence LSSLVIYLKS…GYVLKPDFLR (117 aa). The substrate site is built by serine 559 and arginine 586. Residues 646 to 773 form the C2 domain; the sequence is RDNQSSFHPE…QGYRHIHLLS (128 aa). Ca(2+) is bound by residues isoleucine 687, aspartate 689, asparagine 713, aspartate 742, tyrosine 743, and aspartate 744. The PDZ-binding signature appears at 768 to 771; that stretch reads HIHL.

As to quaternary structure, interacts with GRIP1. Interacts (via GBA motif) with guanine nucleotide-binding protein G(i) alpha subunit GNAI3 (inactive GDP-bound form); low-affinity interaction. It depends on Ca(2+) as a cofactor.

Its subcellular location is the membrane. The protein resides in the nucleus. It is found in the cytoplasm. It localises to the endoplasmic reticulum. It carries out the reaction a 1,2-diacyl-sn-glycero-3-phospho-(1D-myo-inositol-4,5-bisphosphate) + H2O = 1D-myo-inositol 1,4,5-trisphosphate + a 1,2-diacyl-sn-glycerol + H(+). It catalyses the reaction a 1,2-diacyl-sn-glycero-3-phospho-(1D-myo-inositol) + H2O = 1D-myo-inositol 1-phosphate + a 1,2-diacyl-sn-glycerol + H(+). Hydrolyzes the phosphatidylinositol 4,5-bisphosphate (PIP2) to generate 2 second messenger molecules diacylglycerol (DAG) and inositol 1,4,5-trisphosphate (IP3). DAG mediates the activation of protein kinase C (PKC), while IP3 releases Ca(2+) from intracellular stores. Required for acrosome reaction in sperm during fertilization, probably by acting as an important enzyme for intracellular Ca(2+) mobilization in the zona pellucida-induced acrosome reaction. May play a role in cell growth. Modulates the liver regeneration in cooperation with nuclear PKC. Overexpression up-regulates the Erk signaling pathway and proliferation. The polypeptide is 1-phosphatidylinositol 4,5-bisphosphate phosphodiesterase delta-4 (PLCD4) (Macaca fascicularis (Crab-eating macaque)).